A 364-amino-acid chain; its full sequence is Probable dual-specificity RNA methyltransferase RlmN (364 aa).

Glu-107 functions as the Proton acceptor in the catalytic mechanism. In terms of domain architecture, Radical SAM core spans 113–346; it reads HEYGNSVCVT…ATIRREQGSD (234 aa). Cys-120 and Cys-351 are disulfide-bonded. 3 residues coordinate [4Fe-4S] cluster: Cys-127, Cys-131, and Cys-134. Residues 177–178, Ser-209, 232–234, and Asn-308 each bind S-adenosyl-L-methionine; these read GE and SLH. Residue Cys-351 is the S-methylcysteine intermediate of the active site.

This sequence belongs to the radical SAM superfamily. RlmN family. [4Fe-4S] cluster serves as cofactor.

The protein localises to the cytoplasm. It carries out the reaction adenosine(2503) in 23S rRNA + 2 reduced [2Fe-2S]-[ferredoxin] + 2 S-adenosyl-L-methionine = 2-methyladenosine(2503) in 23S rRNA + 5'-deoxyadenosine + L-methionine + 2 oxidized [2Fe-2S]-[ferredoxin] + S-adenosyl-L-homocysteine. The catalysed reaction is adenosine(37) in tRNA + 2 reduced [2Fe-2S]-[ferredoxin] + 2 S-adenosyl-L-methionine = 2-methyladenosine(37) in tRNA + 5'-deoxyadenosine + L-methionine + 2 oxidized [2Fe-2S]-[ferredoxin] + S-adenosyl-L-homocysteine. Functionally, specifically methylates position 2 of adenine 2503 in 23S rRNA and position 2 of adenine 37 in tRNAs. Confers resistance to some classes of antibiotics. This chain is Probable dual-specificity RNA methyltransferase RlmN, found in Staphylococcus carnosus (strain TM300).